The chain runs to 329 residues: Cytoplasmic phosphatidylinositol transfer protein 1 (329 aa).

The segment at 267-329 (SHGGYSSAPS…GNKPSLAKPE (63 aa)) is disordered.

The protein belongs to the PtdIns transfer protein family. PI transfer class IIB subfamily.

It localises to the cytoplasm. The enzyme catalyses a 1,2-diacyl-sn-glycero-3-phospho-(1D-myo-inositol)(in) = a 1,2-diacyl-sn-glycero-3-phospho-(1D-myo-inositol)(out). It catalyses the reaction a 1,2-diacyl-sn-glycero-3-phosphate(in) = a 1,2-diacyl-sn-glycero-3-phosphate(out). In terms of biological role, catalyzes the transfer of phosphatidylinositol (PI) and phosphatidic acid (PA) between membranes. Binds PA derived from the phospholipase D signaling pathway and among the cellular PA species, preferably binds to the C16:0/16:1 and C16:1/18:1 PA species. The protein is Cytoplasmic phosphatidylinositol transfer protein 1 (pitpnc1) of Xenopus tropicalis (Western clawed frog).